The sequence spans 555 residues: Protection of telomeres protein 1 (555 aa).

Belongs to the telombin family. Self-associates. Interacts with ccq1, poz1 and tpz1.

The protein resides in the nucleus. The protein localises to the chromosome. It is found in the telomere. Functionally, single-stranded telomeric DNA-binding protein that is required to protect the 3'-end telomeric overhang. It binds the consensus sequence 5'-GGTTAC-3'. Regulates telomerase and telomere length. The polypeptide is Protection of telomeres protein 1 (pot1) (Schizosaccharomyces pombe (strain 972 / ATCC 24843) (Fission yeast)).